Consider the following 341-residue polypeptide: tRNA N6-adenosine threonylcarbamoyltransferase (341 aa).

His111 and His115 together coordinate Fe cation. Residues 134 to 138 (LVSGG), Asp167, Gly180, and Asn272 each bind substrate. Asp300 lines the Fe cation pocket.

Belongs to the KAE1 / TsaD family. Requires Fe(2+) as cofactor.

Its subcellular location is the cytoplasm. The enzyme catalyses L-threonylcarbamoyladenylate + adenosine(37) in tRNA = N(6)-L-threonylcarbamoyladenosine(37) in tRNA + AMP + H(+). Its function is as follows. Required for the formation of a threonylcarbamoyl group on adenosine at position 37 (t(6)A37) in tRNAs that read codons beginning with adenine. Is involved in the transfer of the threonylcarbamoyl moiety of threonylcarbamoyl-AMP (TC-AMP) to the N6 group of A37, together with TsaE and TsaB. TsaD likely plays a direct catalytic role in this reaction. This is tRNA N6-adenosine threonylcarbamoyltransferase from Blochmanniella pennsylvanica (strain BPEN).